The following is a 108-amino-acid chain: Transmembrane protein 265 (108 aa).

The next 2 helical transmembrane spans lie at 34 to 54 (AATS…VFAI) and 78 to 98 (LILA…LLLW).

Belongs to the CD225/Dispanin family.

The protein localises to the membrane. The protein is Transmembrane protein 265 of Homo sapiens (Human).